A 124-amino-acid chain; its full sequence is Kinocilin (124 aa).

Helical transmembrane passes span 13–33 (LQLACVALGLVAGSIIIGVSV) and 40–60 (VGGIFLGAAGLGLLIFAYPFL). Residues 80–124 (PNSGPDHGEGRSSNNSNKEGARSGLSTVTRTLEKLKPGGRGTEEG) are disordered. A compositionally biased stretch (polar residues) spans 90-109 (RSSNNSNKEGARSGLSTVTR). Over residues 110 to 124 (TLEKLKPGGRGTEEG) the composition is skewed to basic and acidic residues.

In terms of tissue distribution, preferentially expressed in the inner ear and testis. Localizes mainly in the kinocilium of sensory cells in the inner ear. Also present in the manchette of the spermatids, a transient structure enriched in interconnected microtubules (at protein level).

It is found in the membrane. Functionally, may play a role in stabilizing dense microtubular networks or in vesicular trafficking. The polypeptide is Kinocilin (Kncn) (Mus musculus (Mouse)).